A 500-amino-acid chain; its full sequence is Probable cytosol aminopeptidase (500 aa).

2 residues coordinate Mn(2+): Lys264 and Asp269. The active site involves Lys276. Mn(2+) contacts are provided by Asp287, Asp346, and Glu348. Arg350 is an active-site residue.

It belongs to the peptidase M17 family. Mn(2+) serves as cofactor.

It is found in the cytoplasm. The enzyme catalyses Release of an N-terminal amino acid, Xaa-|-Yaa-, in which Xaa is preferably Leu, but may be other amino acids including Pro although not Arg or Lys, and Yaa may be Pro. Amino acid amides and methyl esters are also readily hydrolyzed, but rates on arylamides are exceedingly low.. It catalyses the reaction Release of an N-terminal amino acid, preferentially leucine, but not glutamic or aspartic acids.. Functionally, presumably involved in the processing and regular turnover of intracellular proteins. Catalyzes the removal of unsubstituted N-terminal amino acids from various peptides. The chain is Probable cytosol aminopeptidase from Rhodopseudomonas palustris (strain BisB5).